Reading from the N-terminus, the 204-residue chain is GTP cyclohydrolase-2 (204 aa).

A GTP-binding site is contributed by 49-53 (RIHSE). Zn(2+) contacts are provided by cysteine 54, cysteine 65, and cysteine 67. Residues glutamine 70, 92–94 (EGR), and threonine 114 each bind GTP. The Proton acceptor role is filled by aspartate 126. The active-site Nucleophile is arginine 128. 2 residues coordinate GTP: threonine 149 and lysine 154.

The protein belongs to the GTP cyclohydrolase II family. Zn(2+) is required as a cofactor.

It carries out the reaction GTP + 4 H2O = 2,5-diamino-6-hydroxy-4-(5-phosphoribosylamino)-pyrimidine + formate + 2 phosphate + 3 H(+). It functions in the pathway cofactor biosynthesis; riboflavin biosynthesis; 5-amino-6-(D-ribitylamino)uracil from GTP: step 1/4. Functionally, catalyzes the conversion of GTP to 2,5-diamino-6-ribosylamino-4(3H)-pyrimidinone 5'-phosphate (DARP), formate and pyrophosphate. This Shewanella baltica (strain OS155 / ATCC BAA-1091) protein is GTP cyclohydrolase-2.